The sequence spans 1515 residues: Neurite extension and migration factor (1515 aa).

The segment covering 381–405 (DKKKGKEEVHEDKSIETKDEKDNGE) has biased composition (basic and acidic residues). 6 disordered regions span residues 381–415 (DKKK…KPCG), 505–529 (VNER…PKKR), 731–774 (KKIK…HMSE), 1158–1225 (FDEP…TKKG), 1372–1422 (TPQE…EDSR), and 1435–1479 (TLGN…AGTT). 2 stretches are compositionally biased toward polar residues: residues 746-757 (SPVSEDTSSKAN) and 763-772 (TPGTSNSSHM). A compositionally biased stretch (low complexity) spans 1180-1193 (PGKSGAVSQSSSQK). The segment covering 1442-1452 (THKKLYRHKSS) has biased composition (basic residues). A compositionally biased stretch (basic and acidic residues) spans 1455 to 1479 (GLRDEKYKGKRVEREQAHKDEAGTT).

Expressed in the brain, particularly during the late embryonic and perinatal stages of development. In the developing brain, it is expressed only in the cortical plate and subplate region but not in the intermediate or ventricular zone.

It localises to the nucleus. The protein resides in the cytoplasm. Its function is as follows. Involved in neurite outgrowth by regulating cell-cell adhesion via the N-cadherin signaling pathway. May act by regulating expression of protein-coding genes, such as N-cadherins and integrin beta-1 (ITGB1). The polypeptide is Neurite extension and migration factor (Mus musculus (Mouse)).